Consider the following 246-residue polypeptide: 3-deoxy-manno-octulosonate cytidylyltransferase (246 aa).

This sequence belongs to the KdsB family.

It localises to the cytoplasm. It carries out the reaction 3-deoxy-alpha-D-manno-oct-2-ulosonate + CTP = CMP-3-deoxy-beta-D-manno-octulosonate + diphosphate. It participates in nucleotide-sugar biosynthesis; CMP-3-deoxy-D-manno-octulosonate biosynthesis; CMP-3-deoxy-D-manno-octulosonate from 3-deoxy-D-manno-octulosonate and CTP: step 1/1. Its pathway is bacterial outer membrane biogenesis; lipopolysaccharide biosynthesis. Functionally, activates KDO (a required 8-carbon sugar) for incorporation into bacterial lipopolysaccharide in Gram-negative bacteria. This Paramagnetospirillum magneticum (strain ATCC 700264 / AMB-1) (Magnetospirillum magneticum) protein is 3-deoxy-manno-octulosonate cytidylyltransferase.